Here is a 325-residue protein sequence, read N- to C-terminus: Helicase VP6-A (325 aa).

Disordered stretches follow at residues 1 to 122 and 185 to 230; these read MLLA…GATG and DLRR…EPAR. 4 stretches are compositionally biased toward basic and acidic residues: residues 8-18, 32-54, 61-79, and 92-105; these read VIKRSSEELKQ, EGGKEDKTEPKEESKAEGSKDGE, GQKEEGGKETKDADVDRRI, and LGERANENADRGDG. Residue K106 participates in ATP binding. Positions 106–122 are enriched in gly residues; the sequence is KVGGGGGDADAGVGATG. Composition is skewed to basic and acidic residues over residues 185–203 and 211–229; these read DLRRKEKNGTHAKAVERGG and HGDAQREGVEEEKTSEEPA.

Belongs to the orbivirus VP6 family. As to quaternary structure, homohexamer.

It is found in the virion. The catalysed reaction is ATP + H2O = ADP + phosphate + H(+). In terms of biological role, ATP dependent RNA helicase essential for RNA packaging and viral transcription. Possesses ss- and dsRNA-binding capacity. The chain is Helicase VP6-A (Segment-9) from Bluetongue virus 17 (isolate USA) (BTV 17).